The sequence spans 288 residues: Mortality factor 4-like protein 2 (288 aa).

Residues 1–15 show a composition bias toward polar residues; the sequence is MSSRKQASQTRGQQS. The interval 1–115 is disordered; sequence MSSRKQASQT…DPTVESEEAF (115 aa). Ser-71 is subject to Phosphoserine. The MRG domain occupies 117 to 288; that stretch reads SRMEVKVKIP…ASADYHRKAL (172 aa).

In terms of assembly, component of the NuA4 histone acetyltransferase complex which contains the catalytic subunit KAT5/TIP60 and the subunits EP400, TRRAP/PAF400, BRD8/SMAP, EPC1, DMAP1/DNMAP1, RUVBL1/TIP49, RUVBL2, ING3, actin, ACTL6A/BAF53A, MORF4L1/MRG15, MORF4L2/MRGX, MRGBP, YEATS4/GAS41 and VPS72/YL1. The NuA4 complex interacts with MYC and the adenovirus E1A protein. MORF4L1 may also participate in the formation of NuA4 related complexes which lack the KAT5/TIP60 catalytic subunit, but which include the SWI/SNF related protein SRCAP. Component of the MSIN3A histone deacetylase complex, which includes SIN3A, HDAC2, ARID4B, MORF4L1, RBBP4/RbAp48, and RBBP7/RbAp46. Interacts with MRFAP1 and RB1. May also interact with one or more as yet undefined members of the TLE (transducin-like enhancer of split) family of transcriptional repressors.

Its subcellular location is the nucleus. Its function is as follows. Component of the NuA4 histone acetyltransferase complex which is involved in transcriptional activation of select genes principally by acetylation of nucleosomal histone H4 and H2A. This modification may both alter nucleosome - DNA interactions and promote interaction of the modified histones with other proteins which positively regulate transcription. This complex may be required for the activation of transcriptional programs associated with oncogene and proto-oncogene mediated growth induction, tumor suppressor mediated growth arrest and replicative senescence, apoptosis, and DNA repair. The NuA4 complex ATPase and helicase activities seem to be, at least in part, contributed by the association of RUVBL1 and RUVBL2 with EP400. NuA4 may also play a direct role in DNA repair when directly recruited to sites of DNA damage. Also a component of the MSIN3A complex which acts to repress transcription by deacetylation of nucleosomal histones. The polypeptide is Mortality factor 4-like protein 2 (Morf4l2) (Rattus norvegicus (Rat)).